The sequence spans 483 residues: 6-phosphogluconate dehydrogenase, decarboxylating (483 aa).

NADP(+)-binding positions include 10-15 (GLAVMG) and 33-35 (NRT). Lys-38 bears the N6-acetyllysine mark. Ser-57 carries the phosphoserine modification. An N6-acetyllysine modification is found at Lys-59. NADP(+)-binding positions include 75–77 (VKA) and Asn-103. Substrate contacts are provided by residues Asn-103 and 129–131 (SGG). Ser-129 is subject to Phosphoserine. Lys-184 (proton acceptor) is an active-site residue. 187–188 (HN) provides a ligand contact to substrate. Residue Glu-191 is the Proton donor of the active site. Residues Tyr-192, Lys-261, and Arg-288 each coordinate substrate. Lys-309 is modified (N6-acetyllysine). The substrate site is built by Arg-447 and His-453. An NADP(+)-binding site is contributed by 478–481 (SSSY).

Belongs to the 6-phosphogluconate dehydrogenase family. In terms of assembly, homodimer.

It localises to the cytoplasm. The enzyme catalyses 6-phospho-D-gluconate + NADP(+) = D-ribulose 5-phosphate + CO2 + NADPH. It functions in the pathway carbohydrate degradation; pentose phosphate pathway; D-ribulose 5-phosphate from D-glucose 6-phosphate (oxidative stage): step 3/3. Its function is as follows. Catalyzes the oxidative decarboxylation of 6-phosphogluconate to ribulose 5-phosphate and CO(2), with concomitant reduction of NADP to NADPH. This is 6-phosphogluconate dehydrogenase, decarboxylating (PGD) from Homo sapiens (Human).